A 486-amino-acid polypeptide reads, in one-letter code: Hexokinase-2 (486 aa).

A Phosphoserine modification is found at Ser15. In terms of domain architecture, Hexokinase spans 21-469 (KELMQQIENF…SGAGAAVIAA (449 aa)). A Phosphothreonine modification is found at Thr38. Residues 75–209 (TGKESGDFLA…NIPIEVVALI (135 aa)) form a hexokinase small subdomain region. Residues 86-91 (DLGGTN) and Lys111 contribute to the ATP site. At Ser158 the chain carries Phosphoserine. Substrate is bound by residues Ser158, 175 to 176 (TK), 210 to 211 (ND), and Asn237. The interval 210-458 (NDTTGTLVAS…YPIKIVPAED (249 aa)) is hexokinase large subdomain. The residue at position 245 (Ser245) is a Phosphoserine. Position 269 (Glu269) interacts with substrate. Ser272 carries the post-translational modification Phosphoserine. Substrate is bound at residue Glu302. Residues 307-308 (GY), 344-348 (TSYPA), and 419-423 (SVYNR) contribute to the ATP site.

This sequence belongs to the hexokinase family. As to quaternary structure, homodimer.

The enzyme catalyses a D-hexose + ATP = a D-hexose 6-phosphate + ADP + H(+). The catalysed reaction is D-fructose + ATP = D-fructose 6-phosphate + ADP + H(+). It catalyses the reaction D-glucose + ATP = D-glucose 6-phosphate + ADP + H(+). The protein operates within carbohydrate metabolism; hexose metabolism. It functions in the pathway carbohydrate degradation; glycolysis; D-glyceraldehyde 3-phosphate and glycerone phosphate from D-glucose: step 1/4. With respect to regulation, subject to allosteric control. Substrate inhibition by ATP. In terms of biological role, catalyzes the phosphorylation of hexose, such as D-glucose and D-fructose, to hexose 6-phosphate (D-glucose 6-phosphate and D-fructose 6-phosphate, respectively). Mediates the initial step of glycolysis by catalyzing phosphorylation of D-glucose to D-glucose 6-phosphate. This is Hexokinase-2 (HXK2) from Saccharomyces cerevisiae (strain ATCC 204508 / S288c) (Baker's yeast).